Reading from the N-terminus, the 299-residue chain is Non-structural protein NS-S (299 aa).

Residues 66-69 (PNNP) are involved in inclusion bodies formation. Residues 148-220 (FEGDMVIDSC…KPLLDSLYFA (73 aa)) form an interaction with host TNIP2 region.

The protein belongs to the Bandavirus NS-S protein family. As to quaternary structure, interacts with host TBK1; this interaction antagonizes TBK1 phosphorylation and inhibits TBK1-IRF3 interaction. Interacts with host STAT2; this interaction blocks the nuclear translocation and activation of host STAT2. Interacts with host TNIP2.

It localises to the host cytoplasm. Its function is as follows. Plays a role in the inhibition of host RLR-induced interferon-beta activation by inhibiting the phosphorylation of TANK-binding kinase 1/TBK1, thereby blocking IRF3 activation and preventing the establishment of an antiviral state. Also blocks IFN-triggered nuclear translocation and activation of host STAT2. This chain is Non-structural protein NS-S (NSS), found in Alces americanus (American moose).